The chain runs to 188 residues: Elongation factor P (188 aa).

This sequence belongs to the elongation factor P family.

The protein localises to the cytoplasm. It functions in the pathway protein biosynthesis; polypeptide chain elongation. Its function is as follows. Involved in peptide bond synthesis. Stimulates efficient translation and peptide-bond synthesis on native or reconstituted 70S ribosomes in vitro. Probably functions indirectly by altering the affinity of the ribosome for aminoacyl-tRNA, thus increasing their reactivity as acceptors for peptidyl transferase. The chain is Elongation factor P from Rickettsia akari (strain Hartford).